The sequence spans 109 residues: Nucleoid-associated protein NT01EI_1109 (109 aa).

The segment at 89 to 109 (KERMASVSSGMQLPPGFKMPF) is disordered.

It belongs to the YbaB/EbfC family. In terms of assembly, homodimer.

The protein resides in the cytoplasm. It localises to the nucleoid. Binds to DNA and alters its conformation. May be involved in regulation of gene expression, nucleoid organization and DNA protection. The chain is Nucleoid-associated protein NT01EI_1109 from Edwardsiella ictaluri (strain 93-146).